A 116-amino-acid polypeptide reads, in one-letter code: Large ribosomal subunit protein bL19 (116 aa).

The protein belongs to the bacterial ribosomal protein bL19 family.

This protein is located at the 30S-50S ribosomal subunit interface and may play a role in the structure and function of the aminoacyl-tRNA binding site. This chain is Large ribosomal subunit protein bL19, found in Flavobacterium psychrophilum (strain ATCC 49511 / DSM 21280 / CIP 103535 / JIP02/86).